The sequence spans 664 residues: UvrABC system protein B (664 aa).

Residues 23-180 form the Helicase ATP-binding domain; that stretch reads EGLNRGMRFQ…ERLARIGYQR (158 aa). 36–43 lines the ATP pocket; it reads GVTGSGKT. The Beta-hairpin motif lies at 89 to 112; it reads YYDYYQPEAYIPTKDLYIEKNADI. In terms of domain architecture, Helicase C-terminal spans 429–588; the sequence is DLVNEIVKVK…ITPRSVIKPL (160 aa). A UVR domain is found at 622 to 657; the sequence is EEYMAVLEEEMYRAASELRYEDAAALRDELFRIREE.

This sequence belongs to the UvrB family. Forms a heterotetramer with UvrA during the search for lesions. Interacts with UvrC in an incision complex.

The protein localises to the cytoplasm. The UvrABC repair system catalyzes the recognition and processing of DNA lesions. A damage recognition complex composed of 2 UvrA and 2 UvrB subunits scans DNA for abnormalities. Upon binding of the UvrA(2)B(2) complex to a putative damaged site, the DNA wraps around one UvrB monomer. DNA wrap is dependent on ATP binding by UvrB and probably causes local melting of the DNA helix, facilitating insertion of UvrB beta-hairpin between the DNA strands. Then UvrB probes one DNA strand for the presence of a lesion. If a lesion is found the UvrA subunits dissociate and the UvrB-DNA preincision complex is formed. This complex is subsequently bound by UvrC and the second UvrB is released. If no lesion is found, the DNA wraps around the other UvrB subunit that will check the other stand for damage. This chain is UvrABC system protein B, found in Thermotoga petrophila (strain ATCC BAA-488 / DSM 13995 / JCM 10881 / RKU-1).